Consider the following 213-residue polypeptide: Thymidine kinase (213 aa).

ATP is bound by residues 22 to 29 (GSMFSGKT) and 94 to 97 (DEAQ). The Proton acceptor role is filled by Glu-95. Positions 151, 154, 183, and 186 each coordinate Zn(2+). The segment at 185–213 (RCFQPPRPTSTSSLKAPAPAATAPRPELP) is disordered. The segment covering 193–213 (TSTSSLKAPAPAATAPRPELP) has biased composition (low complexity).

It belongs to the thymidine kinase family. Homotetramer.

The protein resides in the cytoplasm. It carries out the reaction thymidine + ATP = dTMP + ADP + H(+). This chain is Thymidine kinase, found in Rhodothermus sp. (strain ITI 518).